The sequence spans 104 residues: U-scoloptoxin(10)-Cw1a (104 aa).

The signal sequence occupies residues 1–23 (MNKTVAVFFAVICVICVIKSCKT).

This sequence belongs to the scoloptoxin-10 family. Contains 3 disulfide bonds. Expressed by the venom gland.

It localises to the secreted. This Cormocephalus westwoodi (Westwood's green centipede) protein is U-scoloptoxin(10)-Cw1a.